Consider the following 424-residue polypeptide: Riboflavin biosynthesis protein RibBA (424 aa).

The DHBP synthase stretch occupies residues 1–206; the sequence is MFTCEAGIAS…VDDLITYRYT (206 aa). Residues 32–33, Asp-37, 145–149, and Glu-169 contribute to the D-ribulose 5-phosphate site; these read RE and RPGHT. Glu-33 is a Mg(2+) binding site. Residue His-148 participates in Mg(2+) binding. Positions 207 to 424 are GTP cyclohydrolase II; it reads YDSLVTKISS…YETVERMSCR (218 aa). GTP is bound at residue 257-261; it reads RVHSE. Zn(2+) is bound by residues Cys-262, Cys-273, and Cys-275. GTP is bound by residues Gln-278, 301–303, and Thr-323; that span reads EGR. Asp-335 functions as the Proton acceptor; for GTP cyclohydrolase activity in the catalytic mechanism. Arg-337 functions as the Nucleophile; for GTP cyclohydrolase activity in the catalytic mechanism. GTP-binding residues include Thr-358 and Lys-363.

The protein in the N-terminal section; belongs to the DHBP synthase family. It in the C-terminal section; belongs to the GTP cyclohydrolase II family. Mg(2+) is required as a cofactor. It depends on Mn(2+) as a cofactor. Requires Zn(2+) as cofactor.

The catalysed reaction is D-ribulose 5-phosphate = (2S)-2-hydroxy-3-oxobutyl phosphate + formate + H(+). It catalyses the reaction GTP + 4 H2O = 2,5-diamino-6-hydroxy-4-(5-phosphoribosylamino)-pyrimidine + formate + 2 phosphate + 3 H(+). It participates in cofactor biosynthesis; riboflavin biosynthesis; 2-hydroxy-3-oxobutyl phosphate from D-ribulose 5-phosphate: step 1/1. The protein operates within cofactor biosynthesis; riboflavin biosynthesis; 5-amino-6-(D-ribitylamino)uracil from GTP: step 1/4. Functionally, catalyzes the conversion of D-ribulose 5-phosphate to formate and 3,4-dihydroxy-2-butanone 4-phosphate. Catalyzes the conversion of GTP to 2,5-diamino-6-ribosylamino-4(3H)-pyrimidinone 5'-phosphate (DARP), formate and pyrophosphate. This is Riboflavin biosynthesis protein RibBA from Chlamydia trachomatis serovar D (strain ATCC VR-885 / DSM 19411 / UW-3/Cx).